A 380-amino-acid chain; its full sequence is MTKKRYTLLKKDGKARRGEFVTPHGTIQTPVFMNVGTLAAIKGAVSSMDLKEIGCQVELSNTYHLHLRPGDKIVKQMGGLHNFMNWDRPILTDSGGFQVFSLAGMRKIKEEGVYFNSHIDGRKIFMGPEESMQIQSNLGSTIAMAFDECIPNPSTREYVEKSVARTTRWLERCKKEMDRLNSLDDTVNKEQMLFGINQGGVYEDIRIEHAKTIREMDLDGYAIGGLAVGETHEEMYRVIDAVVPHLPEDKPIYLMGVGLPSNILEAVERGVDFFDCVLPARNGRHGHVFTKEGKINLMNAKFELDARPIDEGCQCPACKNYTRAYIRHLFKAKEMLAMRLCVLHNLYFYNKLMEDIRDAIDGGYFAEFKAKKLEEWNGRA.

Catalysis depends on Asp-93, which acts as the Proton acceptor. Substrate-binding positions include 93–97, Asp-147, Gln-198, and Gly-225; that span reads DSGGF. Residues 256–262 are RNA binding; the sequence is GVGLPSN. The active-site Nucleophile is the Asp-275. Residues 280 to 284 form an RNA binding; important for wobble base 34 recognition region; the sequence is ARNGR. 4 residues coordinate Zn(2+): Cys-313, Cys-315, Cys-318, and His-344.

Belongs to the queuine tRNA-ribosyltransferase family. In terms of assembly, homodimer. Within each dimer, one monomer is responsible for RNA recognition and catalysis, while the other monomer binds to the replacement base PreQ1. The cofactor is Zn(2+).

The enzyme catalyses 7-aminomethyl-7-carbaguanine + guanosine(34) in tRNA = 7-aminomethyl-7-carbaguanosine(34) in tRNA + guanine. The protein operates within tRNA modification; tRNA-queuosine biosynthesis. In terms of biological role, catalyzes the base-exchange of a guanine (G) residue with the queuine precursor 7-aminomethyl-7-deazaguanine (PreQ1) at position 34 (anticodon wobble position) in tRNAs with GU(N) anticodons (tRNA-Asp, -Asn, -His and -Tyr). Catalysis occurs through a double-displacement mechanism. The nucleophile active site attacks the C1' of nucleotide 34 to detach the guanine base from the RNA, forming a covalent enzyme-RNA intermediate. The proton acceptor active site deprotonates the incoming PreQ1, allowing a nucleophilic attack on the C1' of the ribose to form the product. After dissociation, two additional enzymatic reactions on the tRNA convert PreQ1 to queuine (Q), resulting in the hypermodified nucleoside queuosine (7-(((4,5-cis-dihydroxy-2-cyclopenten-1-yl)amino)methyl)-7-deazaguanosine). This Clostridium perfringens (strain ATCC 13124 / DSM 756 / JCM 1290 / NCIMB 6125 / NCTC 8237 / Type A) protein is Queuine tRNA-ribosyltransferase.